The following is a 461-amino-acid chain: Bifunctional protein GlmU (461 aa).

Residues 1–232 (MNLQIIILAA…SFEVQGINNR (232 aa)) form a pyrophosphorylase region. Residues 8–11 (LAAG), K22, Q73, and 78–79 (GT) contribute to the UDP-N-acetyl-alpha-D-glucosamine site. Position 102 (D102) interacts with Mg(2+). UDP-N-acetyl-alpha-D-glucosamine-binding residues include G142, E157, and N230. Position 230 (N230) interacts with Mg(2+). The linker stretch occupies residues 233 to 253 (QQLQQLERIWQQRAANQLMEK). The tract at residues 254–461 (GATLADANRF…WKRPVKRERD (208 aa)) is N-acetyltransferase. Positions 336 and 354 each coordinate UDP-N-acetyl-alpha-D-glucosamine. H366 (proton acceptor) is an active-site residue. Residues Y369 and N380 each coordinate UDP-N-acetyl-alpha-D-glucosamine. Acetyl-CoA-binding positions include A383, 389–390 (NY), S408, and A426.

This sequence in the N-terminal section; belongs to the N-acetylglucosamine-1-phosphate uridyltransferase family. It in the C-terminal section; belongs to the transferase hexapeptide repeat family. As to quaternary structure, homotrimer. The cofactor is Mg(2+).

The protein localises to the cytoplasm. The enzyme catalyses alpha-D-glucosamine 1-phosphate + acetyl-CoA = N-acetyl-alpha-D-glucosamine 1-phosphate + CoA + H(+). It carries out the reaction N-acetyl-alpha-D-glucosamine 1-phosphate + UTP + H(+) = UDP-N-acetyl-alpha-D-glucosamine + diphosphate. Its pathway is nucleotide-sugar biosynthesis; UDP-N-acetyl-alpha-D-glucosamine biosynthesis; N-acetyl-alpha-D-glucosamine 1-phosphate from alpha-D-glucosamine 6-phosphate (route II): step 2/2. It functions in the pathway nucleotide-sugar biosynthesis; UDP-N-acetyl-alpha-D-glucosamine biosynthesis; UDP-N-acetyl-alpha-D-glucosamine from N-acetyl-alpha-D-glucosamine 1-phosphate: step 1/1. It participates in bacterial outer membrane biogenesis; LPS lipid A biosynthesis. Catalyzes the last two sequential reactions in the de novo biosynthetic pathway for UDP-N-acetylglucosamine (UDP-GlcNAc). The C-terminal domain catalyzes the transfer of acetyl group from acetyl coenzyme A to glucosamine-1-phosphate (GlcN-1-P) to produce N-acetylglucosamine-1-phosphate (GlcNAc-1-P), which is converted into UDP-GlcNAc by the transfer of uridine 5-monophosphate (from uridine 5-triphosphate), a reaction catalyzed by the N-terminal domain. The sequence is that of Bifunctional protein GlmU from Legionella pneumophila (strain Corby).